The sequence spans 519 residues: MMNYVKSLGTYNTRNMEKESSKDLVQNEDTPLPVQKISMSLFHEIVFVFIACTAQLMTQAGLGQSIAPNNIIGKSLGTTNPGQLSWFPASYSLTVGTFILIAGRLGDIYGHKKMFVLGYIWFCIWSLISGFSYYAKSVIMFDVCRALTGIAPAFLLPNALALLGRVYPPGKKKNLIFALFGATAPNGFLLGSVFSGIFAQLSWWPWTYWTTAIVCIVFAIIGYFAIPHIEADEVEEKQKFDYLGAFFGVSGLVLINFSWNQGPVVGWQVPYVYILLIIGFLSLVVFVLVEKRVVQPILAPSMMNSEMGCVLICVAAGWACFGIWMYYLWQFLENLRFATPLLVTAQLTPVGISGCAAALTTGYLLKRLKPTKIMVVSMIAFTVGTILIATAPIHQTYWAQTFVSIIVTPWGMDMSFPAATLMLSDFVPKQHQGIAASLVSTVVNYSISIGLGIAGTVETHLNHKGVDLIRGYRSAWYMGTGFGGLGVCVAILTVFASYLKVGQQKSPKFPLIMKNTKAV.

A run of 14 helical transmembrane segments spans residues 37 to 57, 82 to 102, 114 to 134, 146 to 166, 175 to 195, 209 to 229, 240 to 260, 269 to 289, 309 to 329, 337 to 357, 373 to 393, 402 to 422, 434 to 454, and 475 to 495; these read ISMS…AQLM, GQLS…ILIA, MFVL…FSYY, ALTG…LGRV, LIFA…SVFS, WTTA…IPHI, FDYL…FSWN, VPYV…FVLV, CVLI…YYLW, FATP…GCAA, IMVV…TAPI, FVSI…ATLM, IAAS…LGIA, and AWYM…LTVF.

Belongs to the major facilitator superfamily.

The protein localises to the endoplasmic reticulum. The protein resides in the membrane. This is an uncharacterized protein from Schizosaccharomyces pombe (strain 972 / ATCC 24843) (Fission yeast).